A 515-amino-acid chain; its full sequence is Putative ribose/galactose/methyl galactoside import ATP-binding protein (515 aa).

ABC transporter domains are found at residues 26–262 (LEVA…VGRE) and 272–511 (VALG…KIMD). 58 to 65 (GENGAGKS) serves as a coordination point for ATP.

It belongs to the ABC transporter superfamily. Carbohydrate importer 2 (CUT2) (TC 3.A.1.2) family.

It is found in the cell inner membrane. The enzyme catalyses D-ribose(out) + ATP + H2O = D-ribose(in) + ADP + phosphate + H(+). It catalyses the reaction D-galactose(out) + ATP + H2O = D-galactose(in) + ADP + phosphate + H(+). Part of an ABC transporter complex involved in carbohydrate import. Could be involved in ribose, galactose and/or methyl galactoside import. Responsible for energy coupling to the transport system. In Hahella chejuensis (strain KCTC 2396), this protein is Putative ribose/galactose/methyl galactoside import ATP-binding protein.